Reading from the N-terminus, the 348-residue chain is 4-hydroxy-3-methylbut-2-en-1-yl diphosphate synthase (flavodoxin) (348 aa).

[4Fe-4S] cluster contacts are provided by Cys-263, Cys-266, Cys-298, and Glu-305.

This sequence belongs to the IspG family. The cofactor is [4Fe-4S] cluster.

The catalysed reaction is (2E)-4-hydroxy-3-methylbut-2-enyl diphosphate + oxidized [flavodoxin] + H2O + 2 H(+) = 2-C-methyl-D-erythritol 2,4-cyclic diphosphate + reduced [flavodoxin]. The protein operates within isoprenoid biosynthesis; isopentenyl diphosphate biosynthesis via DXP pathway; isopentenyl diphosphate from 1-deoxy-D-xylulose 5-phosphate: step 5/6. Converts 2C-methyl-D-erythritol 2,4-cyclodiphosphate (ME-2,4cPP) into 1-hydroxy-2-methyl-2-(E)-butenyl 4-diphosphate. The protein is 4-hydroxy-3-methylbut-2-en-1-yl diphosphate synthase (flavodoxin) of Dehalococcoides mccartyi (strain ATCC BAA-2100 / JCM 16839 / KCTC 5957 / BAV1).